Consider the following 416-residue polypeptide: MHPDSSRKLALKAVVNQTFCQVCGQESHGAHFGAITCRACAAFFRRVAAGANFEVKCKDGRGRCKILTNGRSCCKKCRLKKCKDIGMDIQNFQFNRDSFATSTKVAPSLSTFLGRPEFLLSCSPGTSASTSQNKFIDLSPFIKNCKQVLMDDRKIPLAPGKTRLQKLSSSLDFEISANNKKKKTDLRKVSTLGFSEAIQIFENELLMTSKWLAHFEEFHDLGNDFKFKFLECTWNIWNRLERVARTAALLRDQKISNGKGNEIILARNCVIDLRTVKFEVEWFTNYSLSEISYFIEGVGDWSMNKPLQAIIDFNPTEIELNFMLAQISLTCASKQMDSQYQETIDNLQKLIADDLHSYYIKEMRLPVYSSRIQKMMKVNNMVLRVMWERKEKLSIARMFNIFNPNFSHPELVKDVF.

Positions Q17–F94 form a DNA-binding region, nuclear receptor. NR C4-type zinc fingers lie at residues C20–C40 and C57–C82. In terms of domain architecture, NR LBD spans T162–V415.

The protein belongs to the nuclear hormone receptor family.

It is found in the nucleus. Orphan nuclear receptor. The chain is Nuclear hormone receptor family member nhr-59 from Caenorhabditis elegans.